A 267-amino-acid polypeptide reads, in one-letter code: Outer membrane protein assembly factor BamD (267 aa).

Residues 1–16 form the signal peptide; sequence MKKILLTVSLGLALSA. Cysteine 17 carries N-palmitoyl cysteine lipidation. Cysteine 17 is lipidated: S-diacylglycerol cysteine.

This sequence belongs to the BamD family. In terms of assembly, part of the Bam complex.

The protein localises to the cell outer membrane. Its function is as follows. Part of the outer membrane protein assembly complex, which is involved in assembly and insertion of beta-barrel proteins into the outer membrane. Required for efficient transformation of Neisseria gonorrhoeae by species-related DNA. In Neisseria gonorrhoeae, this protein is Outer membrane protein assembly factor BamD.